The chain runs to 267 residues: Glutamate racemase (267 aa).

Residues 13 to 14 and 45 to 46 contribute to the substrate site; these read DS and YS. Residue Cys77 is the Proton donor/acceptor of the active site. A substrate-binding site is contributed by 78 to 79; it reads NT. The active-site Proton donor/acceptor is Cys188. 189-190 is a substrate binding site; sequence TH.

The protein belongs to the aspartate/glutamate racemases family.

It catalyses the reaction L-glutamate = D-glutamate. Its pathway is cell wall biogenesis; peptidoglycan biosynthesis. Its function is as follows. Provides the (R)-glutamate required for cell wall biosynthesis. The sequence is that of Glutamate racemase from Histophilus somni (strain 2336) (Haemophilus somnus).